A 303-amino-acid polypeptide reads, in one-letter code: tRNA dimethylallyltransferase (303 aa).

9 to 16 (GPTAVGKT) is an ATP binding site. 11–16 (TAVGKT) is a substrate binding site. An interaction with substrate tRNA region spans residues 34–37 (DSRQ).

This sequence belongs to the IPP transferase family. As to quaternary structure, monomer. Mg(2+) is required as a cofactor.

The enzyme catalyses adenosine(37) in tRNA + dimethylallyl diphosphate = N(6)-dimethylallyladenosine(37) in tRNA + diphosphate. In terms of biological role, catalyzes the transfer of a dimethylallyl group onto the adenine at position 37 in tRNAs that read codons beginning with uridine, leading to the formation of N6-(dimethylallyl)adenosine (i(6)A). The protein is tRNA dimethylallyltransferase of Petrotoga mobilis (strain DSM 10674 / SJ95).